We begin with the raw amino-acid sequence, 1150 residues long: Pyruvate carboxylase (1150 aa).

Residues 3-455 (QIKKLLVANR…TTKFIEETPE (453 aa)) enclose the Biotin carboxylation domain. ATP is bound by residues K119, K161, H211, and E278. Residues 123–319 (RTTAIKADLP…IVKTQILVAA (197 aa)) form the ATP-grasp domain. The active site involves R294. The 270-residue stretch at 533–802 (VLLTDTTFRD…HLRTDIEGME (270 aa)) folds into the Pyruvate carboxyltransferase domain. 541–545 (RDAHQ) lines the substrate pocket. D542, K712, H741, and H743 together coordinate Mn(2+). The residue at position 712 (K712) is an N6-carboxylysine. A Biotinyl-binding domain is found at 1071–1146 (KADKSNPSHI…ATGDLLIEIE (76 aa)). K1112 carries the post-translational modification N6-biotinyllysine.

Homotetramer. Requires biotin as cofactor.

It carries out the reaction hydrogencarbonate + pyruvate + ATP = oxaloacetate + ADP + phosphate + H(+). Functionally, catalyzes a 2-step reaction, involving the ATP-dependent carboxylation of the covalently attached biotin in the first step and the transfer of the carboxyl group to pyruvate in the second. The chain is Pyruvate carboxylase (pycA) from Staphylococcus aureus (strain Mu50 / ATCC 700699).